Reading from the N-terminus, the 338-residue chain is 1-aminocyclopropane-1-carboxylate deaminase (338 aa).

Position 51 is an N6-(pyridoxal phosphate)lysine (Lys-51). The Nucleophile role is filled by Ser-78.

It belongs to the ACC deaminase/D-cysteine desulfhydrase family. As to quaternary structure, homotrimer. It depends on pyridoxal 5'-phosphate as a cofactor.

It carries out the reaction 1-aminocyclopropane-1-carboxylate + H2O = 2-oxobutanoate + NH4(+). Its function is as follows. Catalyzes a cyclopropane ring-opening reaction, the irreversible conversion of 1-aminocyclopropane-1-carboxylate (ACC) to ammonia and alpha-ketobutyrate. Allows growth on ACC as a nitrogen source. This chain is 1-aminocyclopropane-1-carboxylate deaminase, found in Burkholderia ambifaria (strain ATCC BAA-244 / DSM 16087 / CCUG 44356 / LMG 19182 / AMMD) (Burkholderia cepacia (strain AMMD)).